The sequence spans 470 residues: Nuclear receptor ROR-beta (470 aa).

Positions 18–93 form a DNA-binding region, nuclear receptor; the sequence is VIPCKICGDK…LGMSRDAVKF (76 aa). NR C4-type zinc fingers lie at residues 21–41 and 57–81; these read CKIC…CEGC and CPRQ…LQKC. The span at 104 to 117 shows a compositional bias: basic and acidic residues; it reads LYAEVQKHQQRLQE. A disordered region spans residues 104-127; the sequence is LYAEVQKHQQRLQEQRQQQSGEAE. The NR LBD domain maps to 222–460; that stretch reads EIDRIAQNII…TLFPPLYKEL (239 aa). The short motif at 456 to 461 is the AF-2 element; the sequence is LYKELF.

The protein belongs to the nuclear hormone receptor family. NR1 subfamily. In terms of assembly, monomer. Interacts with CRX.

The protein localises to the nucleus. It is found in the nucleoplasm. Its function is as follows. Nuclear receptor that binds DNA as a monomer to ROR response elements (RORE) containing a single core motif half-site 5'-AGGTCA-3' preceded by a short A-T-rich sequence. Considered to have intrinsic transcriptional activity, have some natural ligands such as all-trans retinoic acid (ATRA) and other retinoids which act as inverse agonists repressing the transcriptional activity. Required for normal postnatal development of rod and cone photoreceptor cells. Modulates rod photoreceptors differentiation at least by inducing the transcription factor NRL-mediated pathway. In cone photoreceptor cells, regulates transcription of OPN1SW. Involved in the regulation of the period length and stability of the circadian rhythm. May control cytoarchitectural patterning of neocortical neurons during development. May act in a dose-dependent manner to regulate barrel formation upon innervation of layer IV neurons by thalamocortical axons. May play a role in the suppression of osteoblastic differentiation through the inhibition of RUNX2 transcriptional activity. Functionally, isoform 1 is critical for hindlimb motor control and for the differentiation of amacrine and horizontal cells in the retina. Regulates the expression of PTF1A synergistically with FOXN4. This chain is Nuclear receptor ROR-beta (RORB), found in Homo sapiens (Human).